An 85-amino-acid polypeptide reads, in one-letter code: uncharacterized protein (85 aa).

The first 21 residues, 1 to 21 (MRPLLCALAGLALLCAVGALA), serve as a signal peptide directing secretion. Residues 22-35 (DGREDRGSPGDTGE) are compositionally biased toward basic and acidic residues. A disordered region spans residues 22-85 (DGREDRGSPG…EVVHLPGSTL (64 aa)). A compositionally biased stretch (low complexity) spans 36–51 (RPAGPARGPGLEPARG).

It is found in the secreted. This is an uncharacterized protein from Homo sapiens (Human).